Consider the following 314-residue polypeptide: GMP synthase [glutamine-hydrolyzing] subunit B (314 aa).

One can recognise a GMPS ATP-PPase domain in the interval 2–186; it reads FDPKKFVEEA…LGIPDEIVER (185 aa). 29–35 contributes to the ATP binding site; the sequence is SGGVDST.

As to quaternary structure, heterodimer composed of a glutamine amidotransferase subunit (A) and a GMP-binding subunit (B).

The enzyme catalyses XMP + L-glutamine + ATP + H2O = GMP + L-glutamate + AMP + diphosphate + 2 H(+). It functions in the pathway purine metabolism; GMP biosynthesis; GMP from XMP (L-Gln route): step 1/1. Catalyzes the synthesis of GMP from XMP. This chain is GMP synthase [glutamine-hydrolyzing] subunit B (guaAB), found in Methanopyrus kandleri (strain AV19 / DSM 6324 / JCM 9639 / NBRC 100938).